Here is a 202-residue protein sequence, read N- to C-terminus: Ribonuclease HII (202 aa).

The RNase H type-2 domain maps to Leu12–Glu201. 3 residues coordinate a divalent metal cation: Asp18, Glu19, and Asp110.

Belongs to the RNase HII family. Mn(2+) serves as cofactor. The cofactor is Mg(2+).

It localises to the cytoplasm. The enzyme catalyses Endonucleolytic cleavage to 5'-phosphomonoester.. Endonuclease that specifically degrades the RNA of RNA-DNA hybrids. The chain is Ribonuclease HII from Coxiella burnetii (strain CbuK_Q154) (Coxiella burnetii (strain Q154)).